A 101-amino-acid chain; its full sequence is Peroxisomal biogenesis factor 39 (101 aa).

Its subcellular location is the peroxisome. Its function is as follows. May be a peroxin involved in the PTS2-mediated protein import pathway. The polypeptide is Peroxisomal biogenesis factor 39 (Homo sapiens (Human)).